The chain runs to 374 residues: Gibberellin 3-beta-dioxygenase 1 (374 aa).

In terms of domain architecture, Fe2OG dioxygenase spans lysine 206 to proline 307. The Fe cation site is built by histidine 231, aspartate 233, and histidine 288. Arginine 298 is an active-site residue. 2-oxoglutarate is bound at residue arginine 298.

Belongs to the iron/ascorbate-dependent oxidoreductase family. GA3OX subfamily. Requires L-ascorbate as cofactor. Fe(2+) is required as a cofactor. In terms of tissue distribution, expressed in radicles, roots, internodes, cotyledons, leaves and shoots. Barely detected in developing seeds. Not detected in flowers or young fruits.

The catalysed reaction is gibberellin A20 + 2-oxoglutarate + O2 = gibberellin A1 + succinate + CO2. The protein operates within plant hormone biosynthesis; gibberellin biosynthesis. Functionally, converts the inactive gibberellin (GA) precursors GA9 and GA20 in the bioactives gibberellins GA4 and GA1. Has a small activity on GA29, producing GA8. Unable to convert GA20 to GA5, GA5 to GA3 or GA12 to GA14. Involved in the production of bioactive GA for vegetative growth and development, but not for the 3-beta-hydroxylation of GA in developing seeds. This chain is Gibberellin 3-beta-dioxygenase 1 (LE), found in Pisum sativum (Garden pea).